The sequence spans 104 residues: Large ribosomal subunit protein uL15z (104 aa).

It belongs to the universal ribosomal protein uL15 family.

In Arabidopsis thaliana (Mouse-ear cress), this protein is Large ribosomal subunit protein uL15z (RPL27AA).